Reading from the N-terminus, the 284-residue chain is 2-dehydro-3-deoxyphosphooctonate aldolase (284 aa).

The protein belongs to the KdsA family.

It localises to the cytoplasm. It carries out the reaction D-arabinose 5-phosphate + phosphoenolpyruvate + H2O = 3-deoxy-alpha-D-manno-2-octulosonate-8-phosphate + phosphate. The protein operates within carbohydrate biosynthesis; 3-deoxy-D-manno-octulosonate biosynthesis; 3-deoxy-D-manno-octulosonate from D-ribulose 5-phosphate: step 2/3. It functions in the pathway bacterial outer membrane biogenesis; lipopolysaccharide biosynthesis. The sequence is that of 2-dehydro-3-deoxyphosphooctonate aldolase from Cronobacter sakazakii (strain ATCC BAA-894) (Enterobacter sakazakii).